We begin with the raw amino-acid sequence, 385 residues long: Spermidine/putrescine import ATP-binding protein PotA (385 aa).

Residues 6–238 enclose the ABC transporter domain; the sequence is IEFKNVSKVF…PINHFVATFI (233 aa). Position 40–47 (40–47) interacts with ATP; that stretch reads GSSGSGKS.

Belongs to the ABC transporter superfamily. Spermidine/putrescine importer (TC 3.A.1.11.1) family. In terms of assembly, the complex is composed of two ATP-binding proteins (PotA), two transmembrane proteins (PotB and PotC) and a solute-binding protein (PotD).

It localises to the cell membrane. It catalyses the reaction ATP + H2O + polyamine-[polyamine-binding protein]Side 1 = ADP + phosphate + polyamineSide 2 + [polyamine-binding protein]Side 1.. In terms of biological role, part of the ABC transporter complex PotABCD involved in spermidine/putrescine import. Responsible for energy coupling to the transport system. The protein is Spermidine/putrescine import ATP-binding protein PotA of Streptococcus sanguinis (strain SK36).